Consider the following 213-residue polypeptide: rRNA N(6)-adenosine-methyltransferase Mettl5 (213 aa).

Residues Gln-28, Thr-31, Gly-59, Cys-62, and 108 to 109 contribute to the S-adenosyl-L-methionine site; that span reads DV.

It belongs to the methyltransferase superfamily. PrmA family. As to quaternary structure, heterodimer; heterodimerizes with Trmt112. As to expression, enriched in the brain.

The protein localises to the cytoplasm. It catalyses the reaction adenosine in rRNA + S-adenosyl-L-methionine = N(6)-methyladenosine in rRNA + S-adenosyl-L-homocysteine + H(+). Its function is as follows. Catalytic subunit of a heterodimer with Trmt112, which specifically methylates the 6th position of adenine in 18S rRNA. The sequence is that of rRNA N(6)-adenosine-methyltransferase Mettl5 from Drosophila melanogaster (Fruit fly).